A 247-amino-acid polypeptide reads, in one-letter code: 14-3-3 protein gamma-A (247 aa).

Belongs to the 14-3-3 family. Homodimer, and heterodimer with other family members.

Its subcellular location is the cytoplasm. Its function is as follows. Adapter protein implicated in the regulation of a large spectrum of both general and specialized signaling pathways. Binds to a large number of partners, usually by recognition of a phosphoserine or phosphothreonine motif. Binding generally results in the modulation of the activity of the binding partner. The chain is 14-3-3 protein gamma-A (ywhag-a) from Xenopus laevis (African clawed frog).